A 112-amino-acid polypeptide reads, in one-letter code: Putative pterin-4-alpha-carbinolamine dehydratase (112 aa).

The protein belongs to the pterin-4-alpha-carbinolamine dehydratase family.

It catalyses the reaction (4aS,6R)-4a-hydroxy-L-erythro-5,6,7,8-tetrahydrobiopterin = (6R)-L-erythro-6,7-dihydrobiopterin + H2O. In Photobacterium profundum (strain SS9), this protein is Putative pterin-4-alpha-carbinolamine dehydratase.